The primary structure comprises 45 residues: Cytochrome b559 subunit beta (45 aa).

Residues 20–36 (WLALHTLGIPTVFFLGA) form a helical membrane-spanning segment. Position 24 (histidine 24) interacts with heme.

The protein belongs to the PsbE/PsbF family. As to quaternary structure, heterodimer of an alpha subunit and a beta subunit. PSII is composed of 1 copy each of membrane proteins PsbA, PsbB, PsbC, PsbD, PsbE, PsbF, PsbH, PsbI, PsbJ, PsbK, PsbL, PsbM, PsbT, PsbX, PsbY, PsbZ, Psb30/Ycf12, peripheral proteins PsbO, CyanoQ (PsbQ), PsbU, PsbV and a large number of cofactors. It forms dimeric complexes. It depends on heme b as a cofactor.

The protein localises to the cellular thylakoid membrane. Functionally, this b-type cytochrome is tightly associated with the reaction center of photosystem II (PSII). PSII is a light-driven water:plastoquinone oxidoreductase that uses light energy to abstract electrons from H(2)O, generating O(2) and a proton gradient subsequently used for ATP formation. It consists of a core antenna complex that captures photons, and an electron transfer chain that converts photonic excitation into a charge separation. The sequence is that of Cytochrome b559 subunit beta from Synechococcus sp. (strain CC9902).